The chain runs to 259 residues: Thiazole synthase (259 aa).

Lys-99 serves as the catalytic Schiff-base intermediate with DXP. 1-deoxy-D-xylulose 5-phosphate-binding positions include Gly-161, 187–188, and 209–210; these read AG and NT.

It belongs to the ThiG family. Homotetramer. Forms heterodimers with either ThiH or ThiS.

It localises to the cytoplasm. The catalysed reaction is [ThiS sulfur-carrier protein]-C-terminal-Gly-aminoethanethioate + 2-iminoacetate + 1-deoxy-D-xylulose 5-phosphate = [ThiS sulfur-carrier protein]-C-terminal Gly-Gly + 2-[(2R,5Z)-2-carboxy-4-methylthiazol-5(2H)-ylidene]ethyl phosphate + 2 H2O + H(+). Its pathway is cofactor biosynthesis; thiamine diphosphate biosynthesis. Its function is as follows. Catalyzes the rearrangement of 1-deoxy-D-xylulose 5-phosphate (DXP) to produce the thiazole phosphate moiety of thiamine. Sulfur is provided by the thiocarboxylate moiety of the carrier protein ThiS. In vitro, sulfur can be provided by H(2)S. The chain is Thiazole synthase from Nautilia profundicola (strain ATCC BAA-1463 / DSM 18972 / AmH).